The sequence spans 350 residues: tRNA uridine(34) hydroxylase (350 aa).

Positions 128–221 (EETDYVMIDT…YMKEYPNDQF (94 aa)) constitute a Rhodanese domain. The active-site Cysteine persulfide intermediate is Cys-181.

This sequence belongs to the TrhO family.

The enzyme catalyses uridine(34) in tRNA + AH2 + O2 = 5-hydroxyuridine(34) in tRNA + A + H2O. Catalyzes oxygen-dependent 5-hydroxyuridine (ho5U) modification at position 34 in tRNAs. The chain is tRNA uridine(34) hydroxylase from Bdellovibrio bacteriovorus (strain ATCC 15356 / DSM 50701 / NCIMB 9529 / HD100).